The primary structure comprises 288 residues: Solute carrier family 25 member 45 (288 aa).

Solcar repeat units follow at residues 1-83 (MPVE…TLLV), 97-191 (PSYM…LCRQ), and 199-286 (PSSA…LLRW). 6 consecutive transmembrane segments (helical) span residues 6-26 (FVAG…FDTV), 63-83 (IASI…TLLV), 100-120 (MHIF…LAPF), 166-186 (GAWA…ITYE), 202-222 (ATVL…ATPL), and 266-286 (SARA…LLRW).

This sequence belongs to the mitochondrial carrier (TC 2.A.29) family.

The protein resides in the mitochondrion inner membrane. This chain is Solute carrier family 25 member 45 (SLC25A45), found in Homo sapiens (Human).